The following is a 162-amino-acid chain: Phospholipase A2 (162 aa).

The N-terminal stretch at 1–22 (MKVLQMFFCVILLCVTSVLVEA) is a signal peptide. Positions 23–35 (KSTTKGDETASKR) are excised as a propeptide. 6 disulfides stabilise this stretch: Cys-60–Cys-155, Cys-62–Cys-78, Cys-77–Cys-134, Cys-84–Cys-127, Cys-94–Cys-120, and Cys-113–Cys-125. Residues Tyr-61, Gly-63, and Gly-65 each contribute to the Ca(2+) site. His-81 is a catalytic residue. Asp-82 contributes to the Ca(2+) binding site. Residue Asp-128 is part of the active site.

Belongs to the phospholipase A2 family. Group I subfamily. D49 sub-subfamily. Ca(2+) is required as a cofactor. As to expression, expressed both outside and in acontia, a specialised envenomation structure laden with batteries of venom-containing nematocysts found only in the superfamily Metridioidea.

It localises to the secreted. It is found in the nematocyst. It carries out the reaction a 1,2-diacyl-sn-glycero-3-phosphocholine + H2O = a 1-acyl-sn-glycero-3-phosphocholine + a fatty acid + H(+). In terms of biological role, PLA2 catalyzes the calcium-dependent hydrolysis of the 2-acyl groups in 3-sn-phosphoglycerides. The chain is Phospholipase A2 from Calliactis polypus (Hermit crab anemone).